Reading from the N-terminus, the 456-residue chain is ATP synthase subunit beta 1 (456 aa).

152–159 (GGAGVGKS) serves as a coordination point for ATP.

This sequence belongs to the ATPase alpha/beta chains family. As to quaternary structure, F-type ATPases have 2 components, CF(1) - the catalytic core - and CF(0) - the membrane proton channel. CF(1) has five subunits: alpha(3), beta(3), gamma(1), delta(1), epsilon(1). CF(0) has three main subunits: a(1), b(2) and c(9-12). The alpha and beta chains form an alternating ring which encloses part of the gamma chain. CF(1) is attached to CF(0) by a central stalk formed by the gamma and epsilon chains, while a peripheral stalk is formed by the delta and b chains.

It is found in the cell membrane. It carries out the reaction ATP + H2O + 4 H(+)(in) = ADP + phosphate + 5 H(+)(out). Its function is as follows. Produces ATP from ADP in the presence of a proton gradient across the membrane. The catalytic sites are hosted primarily by the beta subunits. This Listeria monocytogenes serovar 1/2a (strain ATCC BAA-679 / EGD-e) protein is ATP synthase subunit beta 1.